A 260-amino-acid chain; its full sequence is Proteasome subunit alpha (260 aa).

Belongs to the peptidase T1A family. In terms of assembly, the 20S proteasome core is composed of 14 alpha and 14 beta subunits that assemble into four stacked heptameric rings, resulting in a barrel-shaped structure. The two inner rings, each composed of seven catalytic beta subunits, are sandwiched by two outer rings, each composed of seven alpha subunits. The catalytic chamber with the active sites is on the inside of the barrel. Has a gated structure, the ends of the cylinder being occluded by the N-termini of the alpha-subunits. Is capped at one or both ends by the proteasome regulatory ATPase, PAN.

It is found in the cytoplasm. The formation of the proteasomal ATPase PAN-20S proteasome complex, via the docking of the C-termini of PAN into the intersubunit pockets in the alpha-rings, triggers opening of the gate for substrate entry. Interconversion between the open-gate and close-gate conformations leads to a dynamic regulation of the 20S proteasome proteolysis activity. Its function is as follows. Component of the proteasome core, a large protease complex with broad specificity involved in protein degradation. The sequence is that of Proteasome subunit alpha from Thermococcus kodakarensis (strain ATCC BAA-918 / JCM 12380 / KOD1) (Pyrococcus kodakaraensis (strain KOD1)).